The following is a 123-amino-acid chain: Small ribosomal subunit protein uS12cz/uS12cy/uS12cx/uS12w (123 aa).

Polar residues predominate over residues 1-13 (MPTSNQLLRNSRQ). The disordered stretch occupies residues 1-30 (MPTSNQLLRNSRQPVRKTKKTPALRGCPQR). Residues 14 to 30 (PVRKTKKTPALRGCPQR) are compositionally biased toward basic residues.

It belongs to the universal ribosomal protein uS12 family. As to quaternary structure, part of the 30S ribosomal subunit.

It is found in the plastid. It localises to the chloroplast. Functionally, with S4 and S5 plays an important role in translational accuracy. Located at the interface of the 30S and 50S subunits. The polypeptide is Small ribosomal subunit protein uS12cz/uS12cy/uS12cx/uS12w (rps12-A) (Pelargonium hortorum (Common geranium)).